A 316-amino-acid chain; its full sequence is HPr kinase/phosphorylase (316 aa).

Active-site residues include H143 and K164. G158–S165 is a binding site for ATP. S165 serves as a coordination point for Mg(2+). D182 serves as the catalytic Proton acceptor; for phosphorylation activity. Proton donor; for dephosphorylation activity. Residues L206–N215 are important for the catalytic mechanism of both phosphorylation and dephosphorylation. Position 207 (E207) interacts with Mg(2+). R251 is an active-site residue. Residues P272–R277 are important for the catalytic mechanism of dephosphorylation.

The protein belongs to the HPrK/P family. As to quaternary structure, homohexamer. Mg(2+) is required as a cofactor.

The catalysed reaction is [HPr protein]-L-serine + ATP = [HPr protein]-O-phospho-L-serine + ADP + H(+). It carries out the reaction [HPr protein]-O-phospho-L-serine + phosphate + H(+) = [HPr protein]-L-serine + diphosphate. Functionally, catalyzes the ATP- as well as the pyrophosphate-dependent phosphorylation of a specific serine residue in HPr, a phosphocarrier protein of the phosphoenolpyruvate-dependent sugar phosphotransferase system (PTS). HprK/P also catalyzes the pyrophosphate-producing, inorganic phosphate-dependent dephosphorylation (phosphorolysis) of seryl-phosphorylated HPr (P-Ser-HPr). This chain is HPr kinase/phosphorylase, found in Stenotrophomonas maltophilia (strain K279a).